We begin with the raw amino-acid sequence, 1057 residues long: Carbamoyl phosphate synthase large chain (1057 aa).

A carboxyphosphate synthetic domain region spans residues M1–E401. ATP-binding residues include R129, R169, G175, G176, K208, I210, E215, G241, I242, H243, Q284, and E298. One can recognise an ATP-grasp 1 domain in the interval R133–V327. Residues Q284, E298, and N300 each contribute to the Mg(2+) site. Positions 284, 298, and 300 each coordinate Mn(2+). Residues Y402–S546 form an oligomerization domain region. The tract at residues I547–G929 is carbamoyl phosphate synthetic domain. One can recognise an ATP-grasp 2 domain in the interval E671–I861. The ATP site is built by R707, R746, L748, E752, G777, V778, H779, S780, Q820, and E832. Positions 820, 832, and 834 each coordinate Mg(2+). Mn(2+)-binding residues include Q820, E832, and N834. In terms of domain architecture, MGS-like spans V930–M1057. Positions V930–M1057 are allosteric domain.

This sequence belongs to the CarB family. As to quaternary structure, composed of two chains; the small (or glutamine) chain promotes the hydrolysis of glutamine to ammonia, which is used by the large (or ammonia) chain to synthesize carbamoyl phosphate. Tetramer of heterodimers (alpha,beta)4. It depends on Mg(2+) as a cofactor. Mn(2+) is required as a cofactor.

It catalyses the reaction hydrogencarbonate + L-glutamine + 2 ATP + H2O = carbamoyl phosphate + L-glutamate + 2 ADP + phosphate + 2 H(+). The enzyme catalyses hydrogencarbonate + NH4(+) + 2 ATP = carbamoyl phosphate + 2 ADP + phosphate + 2 H(+). The protein operates within amino-acid biosynthesis; L-arginine biosynthesis; carbamoyl phosphate from bicarbonate: step 1/1. It functions in the pathway pyrimidine metabolism; UMP biosynthesis via de novo pathway; (S)-dihydroorotate from bicarbonate: step 1/3. Its function is as follows. Large subunit of the glutamine-dependent carbamoyl phosphate synthetase (CPSase). CPSase catalyzes the formation of carbamoyl phosphate from the ammonia moiety of glutamine, carbonate, and phosphate donated by ATP, constituting the first step of 2 biosynthetic pathways, one leading to arginine and/or urea and the other to pyrimidine nucleotides. The large subunit (synthetase) binds the substrates ammonia (free or transferred from glutamine from the small subunit), hydrogencarbonate and ATP and carries out an ATP-coupled ligase reaction, activating hydrogencarbonate by forming carboxy phosphate which reacts with ammonia to form carbamoyl phosphate. The polypeptide is Carbamoyl phosphate synthase large chain (Staphylococcus aureus (strain MRSA252)).